The chain runs to 236 residues: Phosphoribosylaminoimidazole-succinocarboxamide synthase (236 aa).

The protein belongs to the SAICAR synthetase family.

It catalyses the reaction 5-amino-1-(5-phospho-D-ribosyl)imidazole-4-carboxylate + L-aspartate + ATP = (2S)-2-[5-amino-1-(5-phospho-beta-D-ribosyl)imidazole-4-carboxamido]succinate + ADP + phosphate + 2 H(+). The protein operates within purine metabolism; IMP biosynthesis via de novo pathway; 5-amino-1-(5-phospho-D-ribosyl)imidazole-4-carboxamide from 5-amino-1-(5-phospho-D-ribosyl)imidazole-4-carboxylate: step 1/2. The sequence is that of Phosphoribosylaminoimidazole-succinocarboxamide synthase from Chlorobium limicola (strain DSM 245 / NBRC 103803 / 6330).